The primary structure comprises 299 residues: N-acetylmuramic acid 6-phosphate etherase (299 aa).

Positions 55-218 constitute an SIS domain; sequence CINCLEKNGR…STTVMVKMGK (164 aa). The Proton donor role is filled by E83. The active site involves E114.

It belongs to the GCKR-like family. MurNAc-6-P etherase subfamily. Homodimer.

The catalysed reaction is N-acetyl-D-muramate 6-phosphate + H2O = N-acetyl-D-glucosamine 6-phosphate + (R)-lactate. It functions in the pathway amino-sugar metabolism; N-acetylmuramate degradation. Its function is as follows. Specifically catalyzes the cleavage of the D-lactyl ether substituent of MurNAc 6-phosphate, producing GlcNAc 6-phosphate and D-lactate. This chain is N-acetylmuramic acid 6-phosphate etherase, found in Pseudothermotoga lettingae (strain ATCC BAA-301 / DSM 14385 / NBRC 107922 / TMO) (Thermotoga lettingae).